Here is a 367-residue protein sequence, read N- to C-terminus: NADH-quinone oxidoreductase subunit D (367 aa).

Belongs to the complex I 49 kDa subunit family. As to quaternary structure, NDH-1 is composed of 14 different subunits. Subunits NuoB, C, D, E, F, and G constitute the peripheral sector of the complex.

It localises to the cell membrane. The enzyme catalyses a quinone + NADH + 5 H(+)(in) = a quinol + NAD(+) + 4 H(+)(out). NDH-1 shuttles electrons from NADH, via FMN and iron-sulfur (Fe-S) centers, to quinones in the respiratory chain. The immediate electron acceptor for the enzyme in this species is believed to be ubiquinone. Couples the redox reaction to proton translocation (for every two electrons transferred, four hydrogen ions are translocated across the cytoplasmic membrane), and thus conserves the redox energy in a proton gradient. This is NADH-quinone oxidoreductase subunit D from Dehalococcoides mccartyi (strain CBDB1).